A 485-amino-acid chain; its full sequence is Probable protein phosphatase 2C 3 (485 aa).

Residues 1–11 are compositionally biased toward low complexity; that stretch reads MSSPSPSSEAA. Disordered stretches follow at residues 1 to 29 and 43 to 72; these read MSSPSPSSEAAAAHHHHHQRRQHAGAAGG and ARAERPMGSGSRICARDEEDGGGGGGAEGG. Positions 13–23 are enriched in basic residues; it reads AHHHHHQRRQH. The 247-residue stretch at 107–353 folds into the PPM-type phosphatase domain; sequence SSSSSSSLAS…DDTTCIVVDM (247 aa). Residues D129, G130, D305, and D344 each contribute to the Mn(2+) site.

Belongs to the PP2C family. Mg(2+) is required as a cofactor. Requires Mn(2+) as cofactor.

It carries out the reaction O-phospho-L-seryl-[protein] + H2O = L-seryl-[protein] + phosphate. It catalyses the reaction O-phospho-L-threonyl-[protein] + H2O = L-threonyl-[protein] + phosphate. This Oryza sativa subsp. japonica (Rice) protein is Probable protein phosphatase 2C 3.